A 99-amino-acid chain; its full sequence is Plastocyanin (99 aa).

In terms of domain architecture, Plastocyanin-like spans 1-99; it reads IEVLLGSDDG…AGMVGKVTVN (99 aa). Cu cation-binding residues include His37, Cys84, His87, and Met92.

Belongs to the plastocyanin family. It depends on Cu(2+) as a cofactor.

The protein resides in the plastid. The protein localises to the chloroplast thylakoid membrane. In terms of biological role, participates in electron transfer between P700 and the cytochrome b6-f complex in photosystem I. This chain is Plastocyanin (PETE), found in Solanum crispum (Chilean potato-tree).